The following is a 261-amino-acid chain: MSRKPLIAGNWKMNLNHFEAIALVQKIAFALPDKYYDKVDVTVLPPFTDLRSVQTLVDGDKLRLSYGAQDLSQHDSGAYTGDISGAFLAKLGCTFVVVGHSERRTYHNEDDALVAAKAATALKHELTPIICIGEHLEVREAGNHVIHCEEQLRGSLAGLSAEQIGKVVIAYEPVWAIGTGRVASASDAQEVCAAIRKELASLASAQIADSVRVLYGGSVNAKNVGELIAQDDIDGGLVGGASLDGEQFATLAAIAAGGPLP.

A substrate-binding site is contributed by asparagine 10–lysine 12. Residue histidine 100 is the Electrophile of the active site. The Proton acceptor role is filled by glutamate 172. Residues glycine 178, serine 218, and glycine 239–glycine 240 each bind substrate.

It belongs to the triosephosphate isomerase family. Homodimer.

The protein localises to the cytoplasm. It carries out the reaction D-glyceraldehyde 3-phosphate = dihydroxyacetone phosphate. It functions in the pathway carbohydrate biosynthesis; gluconeogenesis. It participates in carbohydrate degradation; glycolysis; D-glyceraldehyde 3-phosphate from glycerone phosphate: step 1/1. Its function is as follows. Involved in the gluconeogenesis. Catalyzes stereospecifically the conversion of dihydroxyacetone phosphate (DHAP) to D-glyceraldehyde-3-phosphate (G3P). The protein is Triosephosphate isomerase of Mycolicibacterium paratuberculosis (strain ATCC BAA-968 / K-10) (Mycobacterium paratuberculosis).